A 328-amino-acid polypeptide reads, in one-letter code: MSSSRNTHWCHRCQRAVRLHGQEPVCFYCGGGFVEELDMAQASPFDMFRSHRGVVERDQTFDLMDAFSVFMRNRLAERSHDREIRGRTISSGPENFPGLAPLLIFGGQVPYRLTGDNAVEALFNGGSPGIGITRGNTGDYFFGPGLEELFEQLSAGTTRRGPPPAPRSAIDALPTIKIAQRHLRSSDSNCPVCKDEFELGSEAKQMPCNHIYHSDCIVPWLVQHNSCPVCRQELPSASGPSSSQNRTTPTRNYRSSSSSSSSNSRENGNERRNPFSSFWPFRSSGSSSSSTQNRGGTRNSDTSDENHNYHQQQHQQSYMGYSGWPFDY.

Ser-2 is modified (N-acetylserine). The segment at 190–231 (CPVCKDEFELGSEAKQMPCNHIYHSDCIVPWLVQHNSCPVCR) adopts an RING-type; atypical zinc-finger fold. Positions 233–324 (ELPSASGPSS…QQSYMGYSGW (92 aa)) are disordered. Positions 238 to 250 (SGPSSSQNRTTPT) are enriched in polar residues. 2 stretches are compositionally biased toward low complexity: residues 251-266 (RNYRSSSSSSSSNSRE) and 275-290 (FSSFWPFRSSGSSSSS). Residues 291–300 (TQNRGGTRNS) show a composition bias toward polar residues.

It carries out the reaction S-ubiquitinyl-[E2 ubiquitin-conjugating enzyme]-L-cysteine + [acceptor protein]-L-lysine = [E2 ubiquitin-conjugating enzyme]-L-cysteine + N(6)-ubiquitinyl-[acceptor protein]-L-lysine.. The protein operates within protein modification; protein ubiquitination. Functionally, probable E3 ubiquitin-protein ligase that may possess E3 ubiquitin ligase activity in vitro. The polypeptide is Probable E3 ubiquitin-protein ligase RHC1A (Arabidopsis thaliana (Mouse-ear cress)).